A 170-amino-acid chain; its full sequence is Ribosome maturation factor RimM (170 aa).

Positions 97–170 (HPDEYYWVDL…RIVVDWDPEF (74 aa)) constitute a PRC barrel domain.

Belongs to the RimM family. In terms of assembly, binds ribosomal protein uS19.

Its subcellular location is the cytoplasm. In terms of biological role, an accessory protein needed during the final step in the assembly of 30S ribosomal subunit, possibly for assembly of the head region. Essential for efficient processing of 16S rRNA. May be needed both before and after RbfA during the maturation of 16S rRNA. It has affinity for free ribosomal 30S subunits but not for 70S ribosomes. The polypeptide is Ribosome maturation factor RimM (Xylella fastidiosa (strain M23)).